Reading from the N-terminus, the 319-residue chain is L-threo-3-hydroxyaspartate ammonia-lyase (319 aa).

Lys53 carries the post-translational modification N6-(pyridoxal phosphate)lysine. Pyridoxal 5'-phosphate-binding positions include Asn80, Gly179–Met183, and Thr304.

The protein belongs to the serine/threonine dehydratase family. May be either a monomer or a homodimer. The cofactor is pyridoxal 5'-phosphate. Requires Mn(2+) as cofactor. Mg(2+) serves as cofactor. Ca(2+) is required as a cofactor.

The enzyme catalyses (3S)-3-hydroxy-L-aspartate = oxaloacetate + NH4(+). Its activity is regulated as follows. Is strongly inhibited by hydroxylamine and EDTA in vitro. Its function is as follows. Catalyzes the deamination of L-threo-3-hydroxyaspartate to oxaloacetate and ammonia. Shows a high specificity towards L-threo-3-hydroxyaspartate as other 3-hydroxyaminoacids, i.e. D,L-erythro- and D-threo-3-hydroxyaspartate, D-threonine, L-threonine, D,L-allothreonine, D,L-threo-3-phenylserine, D-serine, and L-serine, are not substrates for this enzyme. Exhibits no detectable serine and aspartate racemase activity. Might play a role in the detoxification of naturally occurring 3-hydroxyaspartate in Pseudomonas sp. T62 cells. This Pseudomonas sp protein is L-threo-3-hydroxyaspartate ammonia-lyase.